Reading from the N-terminus, the 315-residue chain is Protein TIFY 4B (315 aa).

Positions 113-145 are disordered; that stretch reads CHRRDSPRSAEFSGSSGQFVADKDSHKTVSVSP. Residues 151–186 enclose the Tify domain; it reads TNAVVGQMTIFYSGKVNVYDGVPPEKARSIMHFAAN. A Jas motif is present at residues 233–260; that stretch reads QANRKVSLQRYLEKRKDRRFSKTKKAPG. The Nuclear localization signal signature appears at 235-242; it reads NRKVSLQR. Residues 248–257 are compositionally biased toward basic residues; the sequence is KDRRFSKTKK. A disordered region spans residues 248–315; that stretch reads KDRRFSKTKK…LNSDLNSEDN (68 aa). The segment covering 293 to 315 has biased composition (polar residues); it reads PENQTKSPNISVDLNSDLNSEDN.

Belongs to the TIFY/JAZ family. As to quaternary structure, interacts with AFPH2/NINJA.

It is found in the nucleus. Regulates the arrest of dispersed meristematic cells during lamina development. The polypeptide is Protein TIFY 4B (TIFY4B) (Arabidopsis thaliana (Mouse-ear cress)).